The following is a 560-amino-acid chain: Membrane protein insertase YidC (560 aa).

The next 6 membrane-spanning stretches (helical) occupy residues 5-25 (IINL…WQYF), 334-354 (AIDF…MNFF), 357-377 (YVGN…LLMF), 431-451 (LPIL…YVTI), 476-496 (LFGL…WPIL), and 522-542 (FMPL…LIYW).

Belongs to the OXA1/ALB3/YidC family. Type 1 subfamily. As to quaternary structure, interacts with the Sec translocase complex via SecD. Specifically interacts with transmembrane segments of nascent integral membrane proteins during membrane integration.

It is found in the cell inner membrane. Functionally, required for the insertion and/or proper folding and/or complex formation of integral membrane proteins into the membrane. Involved in integration of membrane proteins that insert both dependently and independently of the Sec translocase complex, as well as at least some lipoproteins. Aids folding of multispanning membrane proteins. This chain is Membrane protein insertase YidC, found in Rickettsia rickettsii (strain Sheila Smith).